The sequence spans 201 residues: Protein OPI10 homolog (201 aa).

This sequence belongs to the OPI10 family.

This Anopheles gambiae (African malaria mosquito) protein is Protein OPI10 homolog.